Here is an 83-residue protein sequence, read N- to C-terminus: Cytochrome b559 subunit alpha (83 aa).

A helical transmembrane segment spans residues 21–35; it reads VIHSITIPSLFIAGW. Histidine 23 contacts heme.

It belongs to the PsbE/PsbF family. Heterodimer of an alpha subunit and a beta subunit. PSII is composed of 1 copy each of membrane proteins PsbA, PsbB, PsbC, PsbD, PsbE, PsbF, PsbH, PsbI, PsbJ, PsbK, PsbL, PsbM, PsbT, PsbX, PsbY, PsbZ, Psb30/Ycf12, at least 3 peripheral proteins of the oxygen-evolving complex and a large number of cofactors. It forms dimeric complexes. Heme b is required as a cofactor.

It localises to the plastid membrane. This b-type cytochrome is tightly associated with the reaction center of photosystem II (PSII). PSII is a light-driven water:plastoquinone oxidoreductase that uses light energy to abstract electrons from H(2)O, generating O(2) and a proton gradient subsequently used for ATP formation. It consists of a core antenna complex that captures photons, and an electron transfer chain that converts photonic excitation into a charge separation. This is Cytochrome b559 subunit alpha from Cuscuta reflexa (Southern Asian dodder).